Reading from the N-terminus, the 198-residue chain is Recombination protein RecR (198 aa).

A C4-type zinc finger spans residues 57 to 72; sequence CTVCGHITDTDPCYIC. A Toprim domain is found at 80–175; that stretch reads TTICVVQDPK…KVTRIAHGLP (96 aa).

The protein belongs to the RecR family.

Its function is as follows. May play a role in DNA repair. It seems to be involved in an RecBC-independent recombinational process of DNA repair. It may act with RecF and RecO. This is Recombination protein RecR from Geobacillus sp. (strain WCH70).